The chain runs to 431 residues: Adenylosuccinate synthetase (431 aa).

GTP-binding positions include Gly13 to Lys19 and Gly41 to Thr43. The active-site Proton acceptor is Asp14. Positions 14 and 41 each coordinate Mg(2+). IMP is bound by residues Asp14 to Lys17, Asn39 to His42, Thr130, Arg144, Gln225, Thr240, and Arg304. Residue His42 is the Proton donor of the active site. Ala300–Arg306 lines the substrate pocket. Residues Arg306, Lys332–Asp334, and Ser415–Gly417 contribute to the GTP site.

It belongs to the adenylosuccinate synthetase family. As to quaternary structure, homodimer. Mg(2+) serves as cofactor.

The protein resides in the cytoplasm. The catalysed reaction is IMP + L-aspartate + GTP = N(6)-(1,2-dicarboxyethyl)-AMP + GDP + phosphate + 2 H(+). It functions in the pathway purine metabolism; AMP biosynthesis via de novo pathway; AMP from IMP: step 1/2. Its function is as follows. Plays an important role in the de novo pathway of purine nucleotide biosynthesis. Catalyzes the first committed step in the biosynthesis of AMP from IMP. In Legionella pneumophila (strain Lens), this protein is Adenylosuccinate synthetase.